A 359-amino-acid polypeptide reads, in one-letter code: Probable F-box protein At3g61730 (359 aa).

2 stretches are compositionally biased toward basic and acidic residues: residues 1–14 (MKTR…DSRG) and 37–48 (QKNDIQREEDGR). The segment at 1–60 (MKTRSSDAEGDSRGKMIAPVGEGNGGRKRKLVQSNEQKNDIQREEDGRAKRRIVQSSDQK) is disordered. The region spanning 82 to 128 (QSRFSWYEQDIWTYISRFLDGKSLVKLGATNKWFYKIAMEDTVWRFA) is the F-box; degenerate domain.

Interacts with SKP1A. In terms of tissue distribution, expressed in flower buds, developing anthers, pollen grains, siliques, rosette leaves and roots. Detected at lower levels in open flowers, stems and cauline leaves. Expressed in young seedling in the hydathodes, shoot apical meristem, root tips and lateral root primordia.

It is found in the nucleus. In terms of biological role, regulates tapetum degeneration and pollen maturation during anther development. The sequence is that of Probable F-box protein At3g61730 (RMF) from Arabidopsis thaliana (Mouse-ear cress).